Here is a 496-residue protein sequence, read N- to C-terminus: MASRVNDQSQASRNGLKGKVLTLDTMNPCVRRVEYAVRGPIVQRALELEQELRQGVKKPFTEVIRANIGDAQAMGQRPITFFRQVLALCVYPNLLSSPDFPEDAKRRAERILQACGGHSLGAYSISSGIQPIREDVAQYIERRDGGIPADPNNIFLSTGASDAIVTMLKLLVSGEGRARTGVLIPIPQYPLYSAALAELDAVQVDYYLDEERAWALDIAELRRALCQARDRCCPRVLCVINPGNPTGQVQTRECIEAVIRFAFKEGLFLMADEVYQDNVYAEGSQFHSFKKVLMEMGPPYSTQQELASFHSVSKGYMGECGFRGGYVEVVNMDAEVQKQMGKLMSVRLCPPVPGQALMDMVVSPPTPSEPSFKQFQAERQEVLAELAAKAKLTEQVFNEAPGIRCNPVQGAMYSFPQVQLPLKAVQRAQELGLAPDMFFCLCLLEETGICVVPGSGFGQQEGTYHFRMTILPPMEKLRLLLEKLSHFHAKFTHEYS.

A2 carries the post-translational modification N-acetylalanine. T22 bears the Phosphothreonine mark. Residue K314 is modified to N6-(pyridoxal phosphate)lysine.

It belongs to the class-I pyridoxal-phosphate-dependent aminotransferase family. Alanine aminotransferase subfamily. Homodimer. Pyridoxal 5'-phosphate is required as a cofactor. In terms of tissue distribution, liver, heart, skeletal muscle, etc.

It localises to the cytoplasm. It catalyses the reaction L-alanine + 2-oxoglutarate = pyruvate + L-glutamate. The protein operates within amino-acid degradation; L-alanine degradation via transaminase pathway; pyruvate from L-alanine: step 1/1. Its function is as follows. Catalyzes the reversible transamination between alanine and 2-oxoglutarate to form pyruvate and glutamate. Participates in cellular nitrogen metabolism and also in liver gluconeogenesis starting with precursors transported from skeletal muscles. This chain is Alanine aminotransferase 1 (Gpt), found in Rattus norvegicus (Rat).